Here is a 407-residue protein sequence, read N- to C-terminus: Phosphoglycerate kinase (407 aa).

Residues 24-26 (DIN), arginine 39, 60-63 (HQSR), arginine 117, and arginine 157 each bind substrate. ATP contacts are provided by residues glutamate 330 and 355–358 (GGHI).

This sequence belongs to the phosphoglycerate kinase family.

It is found in the cytoplasm. The catalysed reaction is (2R)-3-phosphoglycerate + ATP = (2R)-3-phospho-glyceroyl phosphate + ADP. Its pathway is carbohydrate degradation; glycolysis; pyruvate from D-glyceraldehyde 3-phosphate: step 2/5. This Archaeoglobus fulgidus (strain ATCC 49558 / DSM 4304 / JCM 9628 / NBRC 100126 / VC-16) protein is Phosphoglycerate kinase (pgk).